We begin with the raw amino-acid sequence, 307 residues long: Putative S-adenosyl-L-methionine-dependent methyltransferase Mflv_5025 (307 aa).

S-adenosyl-L-methionine-binding positions include aspartate 130 and 159–160; that span reads DL.

Belongs to the UPF0677 family.

Its function is as follows. Exhibits S-adenosyl-L-methionine-dependent methyltransferase activity. The protein is Putative S-adenosyl-L-methionine-dependent methyltransferase Mflv_5025 of Mycolicibacterium gilvum (strain PYR-GCK) (Mycobacterium gilvum (strain PYR-GCK)).